The following is an 884-amino-acid chain: Pyruvate, phosphate dikinase (884 aa).

The tract at residues 1–351 is N-terminal; that stretch reads MSTRRVYFFG…LWMLQARAGK (351 aa). Arg-99 provides a ligand contact to ATP. A linker 1 region spans residues 352–408; the sequence is RTGFAMVRIAIDMCKEGMLTEEEALLRIDANKINEFLFKRFDPSVKPVVLGKGIPAS. Residues 409–507 are central; sequence PGAAVGVICF…KFKEGDFISI (99 aa). The residue at position 462 (Thr-462) is a Phosphothreonine; by PDRP1. His-464 (tele-phosphohistidine intermediate) is an active-site residue. Residues 508–542 form a linker 2 region; sequence NGTTGEIYNGAVQTIEPGITDDLQTIMDWSDKYRV. The segment at 543–884 is C-terminal; it reads LKIRTNADTP…IAAIKARTNQ (342 aa). Substrate contacts are provided by Arg-570, Arg-626, Glu-753, Gly-774, Thr-775, Asn-776, and Asp-777. A Mg(2+)-binding site is contributed by Glu-753. Position 777 (Asp-777) interacts with Mg(2+). Cys-839 serves as the catalytic Proton donor.

The protein belongs to the PEP-utilizing enzyme family. Homodimer. Requires Mg(2+) as cofactor. In terms of processing, phosphorylation of Thr-462 in the dark inactivates the enzyme. Dephosphorylation upon light stimulation reactivates the enzyme.

The enzyme catalyses pyruvate + phosphate + ATP = phosphoenolpyruvate + AMP + diphosphate + H(+). Activated by light-induced dephosphorylation. Inhibited by dark-induced phosphorylation. Both reactions are catalyzed by PDRP1. Its function is as follows. Catalyzes the reversible phosphorylation of pyruvate and phosphate. In Giardia intestinalis (Giardia lamblia), this protein is Pyruvate, phosphate dikinase.